Reading from the N-terminus, the 424-residue chain is UPF0229 protein ECA2349 (424 aa).

Positions 53 to 111 (SIPNADINEPMFHQGRGGHRHRVHPGNDHFVQNDKIERPQGGGGSGSGQGDASKDGEGD) are disordered. Residues 77 to 90 (PGNDHFVQNDKIER) show a composition bias toward basic and acidic residues. Residues 92 to 101 (QGGGGSGSGQ) are compositionally biased toward gly residues.

The protein belongs to the UPF0229 family.

In Pectobacterium atrosepticum (strain SCRI 1043 / ATCC BAA-672) (Erwinia carotovora subsp. atroseptica), this protein is UPF0229 protein ECA2349.